Consider the following 273-residue polypeptide: 3-methyl-2-oxobutanoate hydroxymethyltransferase (273 aa).

Residues Asp49 and Asp88 each contribute to the Mg(2+) site. Residues 49–50 (DS), Asp88, and Lys118 contribute to the 3-methyl-2-oxobutanoate site. Mg(2+) is bound at residue Glu120. The active-site Proton acceptor is the Glu187.

The protein belongs to the PanB family. As to quaternary structure, homodecamer; pentamer of dimers. It depends on Mg(2+) as a cofactor.

Its subcellular location is the cytoplasm. The catalysed reaction is 3-methyl-2-oxobutanoate + (6R)-5,10-methylene-5,6,7,8-tetrahydrofolate + H2O = 2-dehydropantoate + (6S)-5,6,7,8-tetrahydrofolate. It functions in the pathway cofactor biosynthesis; (R)-pantothenate biosynthesis; (R)-pantoate from 3-methyl-2-oxobutanoate: step 1/2. Functionally, catalyzes the reversible reaction in which hydroxymethyl group from 5,10-methylenetetrahydrofolate is transferred onto alpha-ketoisovalerate to form ketopantoate. In Rhizobium etli (strain ATCC 51251 / DSM 11541 / JCM 21823 / NBRC 15573 / CFN 42), this protein is 3-methyl-2-oxobutanoate hydroxymethyltransferase.